Reading from the N-terminus, the 145-residue chain is D-aminoacyl-tRNA deacylase (145 aa).

The Gly-cisPro motif, important for rejection of L-amino acids signature appears at G137–P138.

The protein belongs to the DTD family. Homodimer.

Its subcellular location is the cytoplasm. It catalyses the reaction glycyl-tRNA(Ala) + H2O = tRNA(Ala) + glycine + H(+). The catalysed reaction is a D-aminoacyl-tRNA + H2O = a tRNA + a D-alpha-amino acid + H(+). An aminoacyl-tRNA editing enzyme that deacylates mischarged D-aminoacyl-tRNAs. Also deacylates mischarged glycyl-tRNA(Ala), protecting cells against glycine mischarging by AlaRS. Acts via tRNA-based rather than protein-based catalysis; rejects L-amino acids rather than detecting D-amino acids in the active site. By recycling D-aminoacyl-tRNA to D-amino acids and free tRNA molecules, this enzyme counteracts the toxicity associated with the formation of D-aminoacyl-tRNA entities in vivo and helps enforce protein L-homochirality. The protein is D-aminoacyl-tRNA deacylase of Lactobacillus acidophilus (strain ATCC 700396 / NCK56 / N2 / NCFM).